A 504-amino-acid chain; its full sequence is Protein Dok-7 (504 aa).

Positions 4 to 109 constitute a PH domain; that stretch reads AALVEGQVKL…WDARIRYALG (106 aa). Residues 105–210 form the IRS-type PTB domain; it reads RYALGEVHRF…RGISPTKGPF (106 aa). Disordered regions lie at residues 210–229, 249–351, and 411–483; these read FGLRPVLPDPSPPGPSTVEE, SHAG…YSSS, and LCLA…PHAG. Low complexity-rich tracts occupy residues 263 to 279 and 288 to 310; these read LSSSSSEASHLDVSASS and SSSSASTSQEGPRPAAAQAAGEA. Polar residues predominate over residues 331–341; the sequence is GRQSSSDSGIA.

In terms of assembly, homodimer. Forms a heterotetramer composed of 2 DOK7 and 2 MUSK molecules which facilitates MUSK trans-autophosphorylation on tyrosine residue and activation. Interacts (via IRS-type PTB domain) with MUSK (via cytoplasmic part); requires MUSK phosphorylation. Preferentially expressed in skeletal muscle and heart. Present in thigh muscle, diaphragm and heart but not in the liver or spleen (at protein level).

The protein localises to the cell membrane. The protein resides in the synapse. Probable muscle-intrinsic activator of MUSK that plays an essential role in neuromuscular synaptogenesis. Acts in aneural activation of MUSK and subsequent acetylcholine receptor (AchR) clustering in myotubes. Induces autophosphorylation of MUSK. The polypeptide is Protein Dok-7 (DOK7) (Homo sapiens (Human)).